A 33-amino-acid chain; its full sequence is Photosystem II reaction center protein Psb30 (33 aa).

Residues 5–25 form a helical membrane-spanning segment; that stretch reads LIVQLGSLTLITIAGPLIVAL.

The protein belongs to the Psb30/Ycf12 family. As to quaternary structure, PSII is composed of 1 copy each of membrane proteins PsbA, PsbB, PsbC, PsbD, PsbE, PsbF, PsbH, PsbI, PsbJ, PsbK, PsbL, PsbM, PsbT, PsbY, PsbZ, Psb30/Ycf12, peripheral proteins of the oxygen-evolving complex and a large number of cofactors. It forms dimeric complexes.

It localises to the plastid. The protein localises to the chloroplast thylakoid membrane. A core subunit of photosystem II (PSII), probably helps stabilize the reaction center. The polypeptide is Photosystem II reaction center protein Psb30 (Euglena mutabilis).